The sequence spans 380 residues: Omega-3 fatty acid desaturase, endoplasmic reticulum (380 aa).

The chain crosses the membrane as a helical span at residues Val59–Trp78. The Histidine box-1 motif lies at His97–His101. Positions His133–His137 match the Histidine box-2 motif. Helical transmembrane passes span Gly208–Gly231 and Leu238–Leu256. The Histidine box-3 motif lies at His300–His304.

The protein belongs to the fatty acid desaturase type 1 family.

Its subcellular location is the endoplasmic reticulum membrane. Its pathway is lipid metabolism; polyunsaturated fatty acid biosynthesis. In terms of biological role, microsomal (ER) omega-3 fatty acid desaturase introduces the third double bond in the biosynthesis of 18:3 fatty acids, important constituents of plant membranes. It is thought to use cytochrome b5 as an electron donor and to act on fatty acids esterified to phosphatidylcholine and, possibly, other phospholipids. The polypeptide is Omega-3 fatty acid desaturase, endoplasmic reticulum (ARG1) (Vigna radiata var. radiata (Mung bean)).